A 309-amino-acid polypeptide reads, in one-letter code: tRNA dimethylallyltransferase (309 aa).

Residue 11 to 18 participates in ATP binding; it reads GPTASGKS. 13–18 contributes to the substrate binding site; it reads TASGKS. Interaction with substrate tRNA regions lie at residues 36 to 39 and 160 to 164; these read DSMQ and QRLIR.

It belongs to the IPP transferase family. Monomer. Mg(2+) serves as cofactor.

The enzyme catalyses adenosine(37) in tRNA + dimethylallyl diphosphate = N(6)-dimethylallyladenosine(37) in tRNA + diphosphate. Functionally, catalyzes the transfer of a dimethylallyl group onto the adenine at position 37 in tRNAs that read codons beginning with uridine, leading to the formation of N6-(dimethylallyl)adenosine (i(6)A). This Rickettsia felis (strain ATCC VR-1525 / URRWXCal2) (Rickettsia azadi) protein is tRNA dimethylallyltransferase.